A 181-amino-acid polypeptide reads, in one-letter code: Putative J domain-containing protein R266 (181 aa).

Residues 6-70 (NYYQILDVDN…LKRLNYDSYL (65 aa)) enclose the J domain.

This chain is Putative J domain-containing protein R266, found in Acanthamoeba polyphaga (Amoeba).